The primary structure comprises 176 residues: Translation initiation factor IF-3 (176 aa).

Belongs to the IF-3 family. Monomer.

Its subcellular location is the cytoplasm. Functionally, IF-3 binds to the 30S ribosomal subunit and shifts the equilibrium between 70S ribosomes and their 50S and 30S subunits in favor of the free subunits, thus enhancing the availability of 30S subunits on which protein synthesis initiation begins. In Nitratidesulfovibrio vulgaris (strain DSM 19637 / Miyazaki F) (Desulfovibrio vulgaris), this protein is Translation initiation factor IF-3.